The chain runs to 142 residues: MCHAAPAAPAGGRDAPRGGGEFSGAVRSRAVGANFEQRARQFLERRGLAFVAANVTIRGGELDLVMRASDGMLVFVEVRARRSARHGGAAASVGWRKRRRVIAAALDFWARHGAGAACRFDVVAFEAGRLDWLRDAFRADDA.

This sequence belongs to the UPF0102 family.

The protein is UPF0102 protein Bcep1808_0248 of Burkholderia vietnamiensis (strain G4 / LMG 22486) (Burkholderia cepacia (strain R1808)).